The sequence spans 677 residues: Heat shock transcription factor (677 aa).

Disordered regions lie at residues 1-56 (MGHN…DDSN) and 115-164 (STSS…SQQP). 2 stretches are compositionally biased toward polar residues: residues 115–131 (STSSAAKLSDGDLTNAT) and 143–164 (QPSSESQSHSNGYHKQGQSQQP). A DNA-binding region spans residues 193-297 (ARPAFVNKLW…EYLLENIVRQ (105 aa)). Positions 320 to 373 (ELETVKYNQLAIAEDLKRITKDNEMLWKENMMARERHQSQQQVLEKLLRFLSSV) are involved in trimerization. 2 stretches are compositionally biased toward low complexity: residues 400–416 (NHMSNNNHNNTGNINPN) and 457–501 (RSMS…QGQQ). Disordered regions lie at residues 400-444 (NHMS…VPLQ), 457-541 (RSMS…NQYS), and 606-677 (KLNP…RRAA). The tract at residues 466–677 (NLNQRQSPQN…NNGQKRRRAA (212 aa)) is activatory. 2 stretches are compositionally biased toward polar residues: residues 502-541 (FSYPIQGGNQMMNQLGSPIGTQVGSPVGSQYGNQYGNQYS) and 629-641 (FANTGGSGQSEQP). Basic and acidic residues predominate over residues 650-669 (EELRNSRLHEPDRSFEEKNN).

Belongs to the HSF family. As to quaternary structure, homotrimer. Homotrimerization increases the affinity of HSF1 to DNA. In terms of processing, exhibits temperature-dependent phosphorylation.

The protein resides in the nucleus. DNA-binding transcription factor that specifically binds heat shock promoter elements (HSE) and activates transcription. The polypeptide is Heat shock transcription factor (Kluyveromyces lactis (strain ATCC 8585 / CBS 2359 / DSM 70799 / NBRC 1267 / NRRL Y-1140 / WM37) (Yeast)).